A 357-amino-acid chain; its full sequence is Membrane-bound lytic murein transglycosylase C (357 aa).

A signal peptide spans 1–15 (MKKYLLLALLPFLYA). Cys-16 is lipidated: N-palmitoyl cysteine. A lipid anchor (S-diacylglycerol cysteine) is attached at Cys-16.

The protein belongs to the transglycosylase Slt family.

It localises to the cell outer membrane. The enzyme catalyses Exolytic cleavage of the (1-&gt;4)-beta-glycosidic linkage between N-acetylmuramic acid (MurNAc) and N-acetylglucosamine (GlcNAc) residues in peptidoglycan, from either the reducing or the non-reducing ends of the peptidoglycan chains, with concomitant formation of a 1,6-anhydrobond in the MurNAc residue.. Functionally, murein-degrading enzyme. May play a role in recycling of muropeptides during cell elongation and/or cell division. The protein is Membrane-bound lytic murein transglycosylase C of Haemophilus influenzae (strain PittGG).